We begin with the raw amino-acid sequence, 938 residues long: Isoleucine--tRNA ligase (938 aa).

The 'HIGH' region motif lies at 58-68 (PYANGNIHIGH). Glutamate 561 provides a ligand contact to L-isoleucyl-5'-AMP. The 'KMSKS' region motif lies at 602-606 (KMSKS). Lysine 605 contacts ATP. The Zn(2+) site is built by cysteine 901, cysteine 904, cysteine 921, and cysteine 924.

Belongs to the class-I aminoacyl-tRNA synthetase family. IleS type 1 subfamily. In terms of assembly, monomer. Zn(2+) serves as cofactor.

Its subcellular location is the cytoplasm. It carries out the reaction tRNA(Ile) + L-isoleucine + ATP = L-isoleucyl-tRNA(Ile) + AMP + diphosphate. In terms of biological role, catalyzes the attachment of isoleucine to tRNA(Ile). As IleRS can inadvertently accommodate and process structurally similar amino acids such as valine, to avoid such errors it has two additional distinct tRNA(Ile)-dependent editing activities. One activity is designated as 'pretransfer' editing and involves the hydrolysis of activated Val-AMP. The other activity is designated 'posttransfer' editing and involves deacylation of mischarged Val-tRNA(Ile). In Yersinia enterocolitica serotype O:8 / biotype 1B (strain NCTC 13174 / 8081), this protein is Isoleucine--tRNA ligase.